The chain runs to 570 residues: MSEKHPGPLVVEGKLSDAERMKLESNYLRGTIAEDLNDGLTGGFKGDNFLLIRFHGMYQQDDRDIRAERAEQKLEPRHAMLLRCRLPGGVITTTQWQAIDKFAADNTIYGSIRLTNRQTFQFHGILKKNVKPVHQMLHSVGLDALATANDMNRNVLCTSNPYESQLHAEAYEWAKKISEHLLPRTRAYAEIWLDQEKVATTDEEPILGQTYLPRKFKTTVVIPPQNDIDLHANDMNFVAIAENGKLVGFNLLVGGGLSIEHGNKKTYARTASEFGYLPLEHTLAVAEAVVTTQRDWGNRTDRKNAKTKYTLERVGLETFKAEVERRAGIKFEPIRPYEFTGRGDRIGWVKGIDNNWHLTLFIENGRILDYPGRPLKTGLLEIAKIHQGEFRITANQNLIIASVPESQKAKIETLARDHGLMNAVSAQRENSMACVSFPTCPLAMAEAERFLPSFTDKVEAILEKHGIPDEHIVMRVTGCPNGCGRAMLAEIGLVGKAPGRYNLHLGGNRIGTRIPLMYQENITEPDILASLDELIGRWAKEREAGEGFGDFTVRAGIIRPVLDPARDFWE.

[4Fe-4S] cluster-binding residues include Cys-434, Cys-440, Cys-479, and Cys-483. Cys-483 provides a ligand contact to siroheme.

Belongs to the nitrite and sulfite reductase 4Fe-4S domain family. Alpha(8)-beta(8). The alpha component is a flavoprotein, the beta component is a hemoprotein. Requires siroheme as cofactor. [4Fe-4S] cluster serves as cofactor.

The catalysed reaction is hydrogen sulfide + 3 NADP(+) + 3 H2O = sulfite + 3 NADPH + 4 H(+). Its pathway is sulfur metabolism; hydrogen sulfide biosynthesis; hydrogen sulfide from sulfite (NADPH route): step 1/1. Its function is as follows. Component of the sulfite reductase complex that catalyzes the 6-electron reduction of sulfite to sulfide. This is one of several activities required for the biosynthesis of L-cysteine from sulfate. This chain is Sulfite reductase [NADPH] hemoprotein beta-component, found in Salmonella gallinarum (strain 287/91 / NCTC 13346).